A 651-amino-acid chain; its full sequence is Probable inactive purple acid phosphatase 9 (651 aa).

The first 20 residues, 1 to 20 (MIAAVYTLFFFFLLISSVYS), serve as a signal peptide directing secretion. 3 N-linked (GlcNAc...) asparagine glycosylation sites follow: N32, N96, and N202. The Fe cation site is built by D305 and Y308. D305 serves as a coordination point for Zn(2+). N338 provides a ligand contact to Zn(2+). Position 338 (N338) interacts with substrate. N378 and N432 each carry an N-linked (GlcNAc...) asparagine glycan. Residue H444 coordinates Zn(2+). The N-linked (GlcNAc...) asparagine glycan is linked to N475. H483 is a Zn(2+) binding site. 483–485 (HVH) serves as a coordination point for substrate. H485 serves as a coordination point for Fe cation. Residues N495 and N640 are each glycosylated (N-linked (GlcNAc...) asparagine).

This sequence belongs to the metallophosphoesterase superfamily. Purple acid phosphatase family. In terms of assembly, homodimer. Requires Fe cation as cofactor. It depends on Zn(2+) as a cofactor. As to expression, expressed in roots, stems, leaves, flowers and siliques.

The protein resides in the secreted. In Arabidopsis thaliana (Mouse-ear cress), this protein is Probable inactive purple acid phosphatase 9 (PAP9).